The primary structure comprises 370 residues: Gibberellin 3-beta-dioxygenase 2-2 (370 aa).

The Fe2OG dioxygenase domain maps to 205–306 (MTATMHLNWY…RISLGYFLGP (102 aa)). Fe cation contacts are provided by histidine 229, aspartate 231, and histidine 287. The active site involves arginine 297.

This sequence belongs to the iron/ascorbate-dependent oxidoreductase family. GA3OX subfamily. Requires L-ascorbate as cofactor. Fe cation is required as a cofactor.

It catalyses the reaction gibberellin A20 + 2-oxoglutarate + O2 = gibberellin A1 + succinate + CO2. In terms of biological role, converts the inactive gibberellin precursors GA9 and GA20 in the bioactives gibberellins GA4 and GA1. This Triticum aestivum (Wheat) protein is Gibberellin 3-beta-dioxygenase 2-2 (GA3ox2-2).